Consider the following 234-residue polypeptide: Ribosomal RNA large subunit methyltransferase E (234 aa).

The segment at 1 to 37 is disordered; the sequence is MSDDDRRRWKGPGPERQDSGRRSTERKVIARNARTES. S-adenosyl-L-methionine is bound by residues G91, W93, D109, D125, and D149. K189 functions as the Proton acceptor in the catalytic mechanism.

It belongs to the class I-like SAM-binding methyltransferase superfamily. RNA methyltransferase RlmE family.

It is found in the cytoplasm. It carries out the reaction uridine(2552) in 23S rRNA + S-adenosyl-L-methionine = 2'-O-methyluridine(2552) in 23S rRNA + S-adenosyl-L-homocysteine + H(+). In terms of biological role, specifically methylates the uridine in position 2552 of 23S rRNA at the 2'-O position of the ribose in the fully assembled 50S ribosomal subunit. The sequence is that of Ribosomal RNA large subunit methyltransferase E from Hyphomonas neptunium (strain ATCC 15444).